Reading from the N-terminus, the 249-residue chain is tRNA (guanine-N(1)-)-methyltransferase (249 aa).

Residues G117 and 137 to 142 (LGDFVL) contribute to the S-adenosyl-L-methionine site.

It belongs to the RNA methyltransferase TrmD family. As to quaternary structure, homodimer.

The protein localises to the cytoplasm. The catalysed reaction is guanosine(37) in tRNA + S-adenosyl-L-methionine = N(1)-methylguanosine(37) in tRNA + S-adenosyl-L-homocysteine + H(+). Functionally, specifically methylates guanosine-37 in various tRNAs. The polypeptide is tRNA (guanine-N(1)-)-methyltransferase (Janthinobacterium sp. (strain Marseille) (Minibacterium massiliensis)).